Consider the following 281-residue polypeptide: Bis(5'-nucleosyl)-tetraphosphatase, symmetrical (281 aa).

Belongs to the Ap4A hydrolase family.

The enzyme catalyses P(1),P(4)-bis(5'-adenosyl) tetraphosphate + H2O = 2 ADP + 2 H(+). Its function is as follows. Hydrolyzes diadenosine 5',5'''-P1,P4-tetraphosphate to yield ADP. The chain is Bis(5'-nucleosyl)-tetraphosphatase, symmetrical from Pectobacterium atrosepticum (strain SCRI 1043 / ATCC BAA-672) (Erwinia carotovora subsp. atroseptica).